A 257-amino-acid polypeptide reads, in one-letter code: Ribonuclease HII (257 aa).

The RNase H type-2 domain occupies 72–257 (TYIAGIDEVG…FAPIKDMIQK (186 aa)). Positions 78, 79, and 170 each coordinate a divalent metal cation.

The protein belongs to the RNase HII family. Mn(2+) serves as cofactor. Requires Mg(2+) as cofactor.

It is found in the cytoplasm. It carries out the reaction Endonucleolytic cleavage to 5'-phosphomonoester.. Endonuclease that specifically degrades the RNA of RNA-DNA hybrids. This chain is Ribonuclease HII, found in Bacillus cereus (strain ZK / E33L).